The sequence spans 56 residues: Large ribosomal subunit protein bL32 (56 aa).

It belongs to the bacterial ribosomal protein bL32 family.

The polypeptide is Large ribosomal subunit protein bL32 (Synechococcus sp. (strain CC9311)).